The chain runs to 489 residues: Glucose-1-phosphate adenylyltransferase small subunit, chloroplastic/amyloplastic (489 aa).

The N-terminal 52 residues, 1-52 (ITVPSTSSKNLQNSLAFSSSSLSGDKIQTTSFLNRRYCRISSRAPIVVSPKA), are a transit peptide targeting the chloroplast.

Belongs to the bacterial/plant glucose-1-phosphate adenylyltransferase family. Heterotetramer. As to expression, prominently expressed in the leaves. A lower level expression is seen in the roots.

Its subcellular location is the plastid. The protein localises to the chloroplast. The protein resides in the amyloplast. The catalysed reaction is alpha-D-glucose 1-phosphate + ATP + H(+) = ADP-alpha-D-glucose + diphosphate. It functions in the pathway glycan biosynthesis; starch biosynthesis. Activated by 3'phosphoglycerate, inhibited by orthophosphate. Allosteric regulation. Functionally, this protein plays a role in synthesis of starch. It catalyzes the synthesis of the activated glycosyl donor, ADP-glucose from Glc-1-P and ATP. This is Glucose-1-phosphate adenylyltransferase small subunit, chloroplastic/amyloplastic (AGPB1) from Beta vulgaris (Sugar beet).